Reading from the N-terminus, the 69-residue chain is DNA gyrase inhibitor YacG (69 aa).

Zn(2+)-binding residues include Cys-13, Cys-16, Cys-32, and Cys-36.

The protein belongs to the DNA gyrase inhibitor YacG family. As to quaternary structure, interacts with GyrB. It depends on Zn(2+) as a cofactor.

Inhibits all the catalytic activities of DNA gyrase by preventing its interaction with DNA. Acts by binding directly to the C-terminal domain of GyrB, which probably disrupts DNA binding by the gyrase. The polypeptide is DNA gyrase inhibitor YacG (Neisseria meningitidis serogroup B (strain ATCC BAA-335 / MC58)).